Reading from the N-terminus, the 185-residue chain is MTKEVIADMKAHMEKSVDALRREYQKVRTGRATTGLLDDIKVEYYGNPSPLSQVATLSVPEPRTITIQPWEAKLIPVIEKAIMNANLGFTPANDGKTIRISLPPLTEERRKEIVKTLKKMAEDTKVAVRNIRRDGIDSLKKLEKDKKISEDDLKRAEKEVQDVTNTFVAKVEEVLTHKEKEVLEV.

Belongs to the RRF family.

It localises to the cytoplasm. Its function is as follows. Responsible for the release of ribosomes from messenger RNA at the termination of protein biosynthesis. May increase the efficiency of translation by recycling ribosomes from one round of translation to another. In Geobacter metallireducens (strain ATCC 53774 / DSM 7210 / GS-15), this protein is Ribosome-recycling factor.